The following is a 187-amino-acid chain: Elongation factor P (187 aa).

This sequence belongs to the elongation factor P family.

The protein localises to the cytoplasm. It participates in protein biosynthesis; polypeptide chain elongation. In terms of biological role, involved in peptide bond synthesis. Stimulates efficient translation and peptide-bond synthesis on native or reconstituted 70S ribosomes in vitro. Probably functions indirectly by altering the affinity of the ribosome for aminoacyl-tRNA, thus increasing their reactivity as acceptors for peptidyl transferase. The polypeptide is Elongation factor P (efp) (Synechocystis sp. (strain ATCC 27184 / PCC 6803 / Kazusa)).